The primary structure comprises 142 residues: U1 small nuclear ribonucleoprotein C (142 aa).

The Matrin-type zinc finger occupies 4–36 (YYCDYCDTFLTHDSPSVRKTHNGGRKHKDNVRM).

Belongs to the U1 small nuclear ribonucleoprotein C family. In terms of assembly, U1 snRNP is composed of the 7 core Sm proteins B/B', D1, D2, D3, E, F and G that assemble in a heptameric protein ring on the Sm site of the small nuclear RNA to form the core snRNP, and at least 3 U1 snRNP-specific proteins U1-70K, U1-A and U1-C. U1-C interacts with U1 snRNA and the 5' splice-site region of the pre-mRNA.

The protein localises to the nucleus. In terms of biological role, component of the spliceosomal U1 snRNP, which is essential for recognition of the pre-mRNA 5' splice-site and the subsequent assembly of the spliceosome. U1-C is directly involved in initial 5' splice-site recognition for both constitutive and regulated alternative splicing. The interaction with the 5' splice-site seems to precede base-pairing between the pre-mRNA and the U1 snRNA. Stimulates commitment or early (E) complex formation by stabilizing the base pairing of the 5' end of the U1 snRNA and the 5' splice-site region. The sequence is that of U1 small nuclear ribonucleoprotein C from Caenorhabditis elegans.